The primary structure comprises 463 residues: Heterogeneous nuclear ribonucleoprotein K (463 aa).

The residue at position 1 (methionine 1) is an N-acetylmethionine. The disordered stretch occupies residues 1–37 (METEQPEETFPNTETNGEFGKRPAEDMEEEQAFKRSR). Positions 1–276 (METEQPEETF…GRGGRPMPPS (276 aa)) are necessary for interaction with DDX1. Residues 19 to 37 (FGKRPAEDMEEEQAFKRSR) show a composition bias toward basic and acidic residues. At lysine 34 the chain carries N6-acetyllysine; alternate. A Glycyl lysine isopeptide (Lys-Gly) (interchain with G-Cter in SUMO1); alternate cross-link involves residue lysine 34. Lysine 34 is covalently cross-linked (Glycyl lysine isopeptide (Lys-Gly) (interchain with G-Cter in SUMO2); alternate). At serine 36 the chain carries Phosphoserine. Threonine 39 carries the post-translational modification Phosphothreonine. The KH 1 domain occupies 42 to 104 (MVELRILLQS…ETIGEILKKI (63 aa)). Residues lysine 52 and lysine 60 each participate in a glycyl lysine isopeptide (Lys-Gly) (interchain with G-Cter in SUMO2) cross-link. 2 tandem repeats follow at residues 54-76 (AGAVIGKGGKNIKALRTDYNASV) and 59-62 (GKGG). The interval 54 to 421 (AGAVIGKGGK…QIRHESGASI (368 aa)) is 2 X 22 AA approximate repeats. The 5 X 4 AA repeats of G-X-G-G stretch occupies residues 59–407 (GKGGKNIKAL…LAGSIIGKGG (349 aa)). A phosphoserine mark is found at serine 75 and serine 116. Residues 144–209 (DCELRLLIHQ…DRVVECIKII (66 aa)) enclose the KH 2 domain. A Glycyl lysine isopeptide (Lys-Gly) (interchain with G-Cter in SUMO1); alternate cross-link involves residue lysine 163. Lysine 163 is covalently cross-linked (Glycyl lysine isopeptide (Lys-Gly) (interchain with G-Cter in SUMO2); alternate). At lysine 198 the chain carries N6-acetyllysine. The tract at residues 209–337 (ILDLISESPI…RPGDRYDGMV (129 aa)) is interaction with ZIK1. Phosphoserine is present on residues serine 214 and serine 216. A Glycyl lysine isopeptide (Lys-Gly) (interchain with G-Cter in SUMO2); alternate cross-link involves residue lysine 219. Position 219 is an N6-succinyllysine; alternate (lysine 219). The RNA-binding RGG-box stretch occupies residues 236–273 (YGGFTMMFDDRRGRPVGFPMRGRGGFDRMPPGRGGRPM). 3 repeat units span residues 245-250 (DRRGRP), 257-260 (GRGG), and 267-270 (GRGG). The segment at 245–329 (DRRGRPVGFP…LMAYDRRGRP (85 aa)) is 2 X 6 AA repeats of D-R-R-G-R-P. Residues 250–329 (PVGFPMRGRG…LMAYDRRGRP (80 aa)) are disordered. A compositionally biased stretch (low complexity) spans 252–266 (GFPMRGRGGFDRMPP). The span at 276-285 (SRRDYDDMSP) shows a compositional bias: basic and acidic residues. Serine 284 is subject to Phosphoserine. A 3-4 repeat occupies 295-298 (GRGG). Arginine 316 bears the Omega-N-methylarginine mark. Residues 324-329 (DRRGRP) form a 2-2 repeat. The residue at position 377 (arginine 377) is an Omega-N-methylarginine. Serine 379 bears the Phosphoserine mark. At tyrosine 380 the chain carries Phosphotyrosine. The KH 3 domain maps to 387–451 (IITTQVTIPK…DQIQNAQYLL (65 aa)). 2 repeat units span residues 399 to 421 (AGSIIGKGGQRIKQIRHESGASI) and 404 to 407 (GKGG). N6-acetyllysine; alternate is present on lysine 405. A Glycyl lysine isopeptide (Lys-Gly) (interchain with G-Cter in SUMO2); alternate cross-link involves residue lysine 405. Serine 420 is subject to Phosphoserine. Lysine 422 is covalently cross-linked (Glycyl lysine isopeptide (Lys-Gly) (interchain with G-Cter in SUMO1); alternate). Lysine 422 participates in a covalent cross-link: Glycyl lysine isopeptide (Lys-Gly) (interchain with G-Cter in SUMO2); alternate. Lysine 422 is covalently cross-linked (Glycyl lysine isopeptide (Lys-Gly) (interchain with G-Cter in SUMO); alternate).

As to quaternary structure, identified in the spliceosome C complex. Interacts with ANKRD28, RBM42 and ZIK1. Interacts with DDX1. Interacts with MDM2; this interaction leads to ubiquitination and proteasomal degradation. Interacts with p53/TP53. Interacts with BRDT. Interacts with IVNS1ABP. Interacts with PPIA/CYPA. Part of a transcription inhibitory ribonucleoprotein complex composed at least of the circular RNA circZNF827, ZNF827 and HNRNPL. Post-translationally, sumoylated by CBX4. Sumoylation is increased upon DNA damage, such as that produced by doxorubicin, etoposide, UV light and camptothecin, due to enhanced CBX4 phosphorylation by HIPK2 under these conditions. In terms of processing, ubiquitinated by MDM2. Doxorubicin treatment does not affect monoubiquitination, but slightly decreases HNRNPK poly-ubiquitination. O-glycosylated (O-GlcNAcylated), in a cell cycle-dependent manner.

Its subcellular location is the cytoplasm. It localises to the nucleus. The protein localises to the nucleoplasm. It is found in the cell projection. The protein resides in the podosome. Functionally, one of the major pre-mRNA-binding proteins. Binds tenaciously to poly(C) sequences. Likely to play a role in the nuclear metabolism of hnRNAs, particularly for pre-mRNAs that contain cytidine-rich sequences. Can also bind poly(C) single-stranded DNA. Plays an important role in p53/TP53 response to DNA damage, acting at the level of both transcription activation and repression. When sumoylated, acts as a transcriptional coactivator of p53/TP53, playing a role in p21/CDKN1A and 14-3-3 sigma/SFN induction. As far as transcription repression is concerned, acts by interacting with long intergenic RNA p21 (lincRNA-p21), a non-coding RNA induced by p53/TP53. This interaction is necessary for the induction of apoptosis, but not cell cycle arrest. As part of a ribonucleoprotein complex composed at least of ZNF827, HNRNPL and the circular RNA circZNF827 that nucleates the complex on chromatin, may negatively regulate the transcription of genes involved in neuronal differentiation. The polypeptide is Heterogeneous nuclear ribonucleoprotein K (HNRNPK) (Oryctolagus cuniculus (Rabbit)).